The following is a 1252-amino-acid chain: Guanine nucleotide exchange factor SDC25 (1252 aa).

Residues 26–97 (QPIDVVECTY…PPSFTRSILN (72 aa)) enclose the SH3 domain. Disordered regions lie at residues 409–454 (IPAS…DTIW) and 623–648 (LNLD…DEYE). A compositionally biased stretch (low complexity) spans 416 to 428 (TSCSSETSHHSPS). The N-terminal Ras-GEF domain maps to 782–914 (SNNRIKGGSK…LLKEVNQKFK (133 aa)). The Ras-GEF domain maps to 952–1199 (DPVLFATQLT…YQLSLIIEPK (248 aa)). The tract at residues 1201-1252 (RKKVVPNSNSNNKSQEKSRDDQTDEGKTSTKKDRFSKFQLHKTKKKAPKVSK) is disordered. Residues 1214-1236 (SQEKSRDDQTDEGKTSTKKDRFS) are compositionally biased toward basic and acidic residues. Positions 1239 to 1252 (QLHKTKKKAPKVSK) are enriched in basic residues.

In terms of biological role, promotes the exchange of Ras-bound GDP by GTP. The polypeptide is Guanine nucleotide exchange factor SDC25 (SDC25) (Saccharomyces cerevisiae (strain YJM789) (Baker's yeast)).